We begin with the raw amino-acid sequence, 415 residues long: [Pyruvate dehydrogenase (acetyl-transferring)] kinase isozyme 3, mitochondrial (415 aa).

In terms of domain architecture, Histidine kinase spans 131–362 (IEYKEKFGFD…DAVIYLKALS (232 aa)). 247-254 (ELFKNSMR) serves as a coordination point for ATP. At Lys-278 the chain carries N6-succinyllysine. ATP contacts are provided by residues Asp-287, 306-307 (ST), and 323-328 (GFGYGL). Residues 383-415 (TPEADDWSNPSSEPRDASKYKAKQDKIKSNRTF) form a disordered region. Basic and acidic residues predominate over residues 395–415 (EPRDASKYKAKQDKIKSNRTF).

It belongs to the PDK/BCKDK protein kinase family. As to quaternary structure, homodimer. Interacts with the pyruvate dehydrogenase complex subunit DLAT, and is part of the multimeric pyruvate dehydrogenase complex that contains multiple copies of pyruvate dehydrogenase (E1), dihydrolipoamide acetyltransferase (DLAT, E2) and lipoamide dehydrogenase (DLD, E3).

Its subcellular location is the mitochondrion matrix. It catalyses the reaction L-seryl-[pyruvate dehydrogenase E1 alpha subunit] + ATP = O-phospho-L-seryl-[pyruvate dehydrogenase E1 alpha subunit] + ADP + H(+). Functionally, inhibits pyruvate dehydrogenase activity by phosphorylation of the E1 subunit PDHA1, and thereby regulates glucose metabolism and aerobic respiration. Can also phosphorylate PDHA2. Decreases glucose utilization and increases fat metabolism in response to prolonged fasting, and as adaptation to a high-fat diet. Plays a role in glucose homeostasis and in maintaining normal blood glucose levels in function of nutrient levels and under starvation. Plays a role in the generation of reactive oxygen species. This Mus musculus (Mouse) protein is [Pyruvate dehydrogenase (acetyl-transferring)] kinase isozyme 3, mitochondrial (Pdk3).